Reading from the N-terminus, the 214-residue chain is Glycerol-3-phosphate acyltransferase (214 aa).

A run of 5 helical transmembrane segments spans residues 8–28, 70–90, 111–131, 144–164, and 165–185; these read LILAYLLGSIPTGLWIGQIFF, LLPLFLHINGISPMIFGLIAV, AGVVLGFSPLFFSYLIIIFIV, IVVAGFAIISVLIFPLLGIIL, and PSYDLLFTLIIILLASIILIR.

This sequence belongs to the PlsY family. In terms of assembly, probably interacts with PlsX.

It is found in the cell membrane. It carries out the reaction an acyl phosphate + sn-glycerol 3-phosphate = a 1-acyl-sn-glycero-3-phosphate + phosphate. The protein operates within lipid metabolism; phospholipid metabolism. Catalyzes the transfer of an acyl group from acyl-phosphate (acyl-PO(4)) to glycerol-3-phosphate (G3P) to form lysophosphatidic acid (LPA). This enzyme utilizes acyl-phosphate as fatty acyl donor, but not acyl-CoA or acyl-ACP. In Streptococcus gordonii (strain Challis / ATCC 35105 / BCRC 15272 / CH1 / DL1 / V288), this protein is Glycerol-3-phosphate acyltransferase.